The primary structure comprises 163 residues: Cyclic pyranopterin monophosphate synthase (163 aa).

Residues 75–77 (MCH) and 115–116 (ME) contribute to the substrate site. Residue Asp130 is part of the active site.

This sequence belongs to the MoaC family. Homohexamer; trimer of dimers.

The enzyme catalyses (8S)-3',8-cyclo-7,8-dihydroguanosine 5'-triphosphate = cyclic pyranopterin phosphate + diphosphate. The protein operates within cofactor biosynthesis; molybdopterin biosynthesis. Catalyzes the conversion of (8S)-3',8-cyclo-7,8-dihydroguanosine 5'-triphosphate to cyclic pyranopterin monophosphate (cPMP). This is Cyclic pyranopterin monophosphate synthase from Bacillus pumilus (strain SAFR-032).